Reading from the N-terminus, the 246-residue chain is 1-(5-phosphoribosyl)-5-[(5-phosphoribosylamino)methylideneamino] imidazole-4-carboxamide isomerase (246 aa).

The Proton acceptor role is filled by aspartate 10.

Belongs to the HisA/HisF family.

Its subcellular location is the cytoplasm. It catalyses the reaction 1-(5-phospho-beta-D-ribosyl)-5-[(5-phospho-beta-D-ribosylamino)methylideneamino]imidazole-4-carboxamide = 5-[(5-phospho-1-deoxy-D-ribulos-1-ylimino)methylamino]-1-(5-phospho-beta-D-ribosyl)imidazole-4-carboxamide. Its pathway is amino-acid biosynthesis; L-histidine biosynthesis; L-histidine from 5-phospho-alpha-D-ribose 1-diphosphate: step 4/9. The protein is 1-(5-phosphoribosyl)-5-[(5-phosphoribosylamino)methylideneamino] imidazole-4-carboxamide isomerase of Corynebacterium efficiens (strain DSM 44549 / YS-314 / AJ 12310 / JCM 11189 / NBRC 100395).